We begin with the raw amino-acid sequence, 603 residues long: Elongation factor 4 (603 aa).

The tr-type G domain maps to 7-189 (KKIRNFCIIA…SVVKNVPPPE (183 aa)). GTP is bound by residues 19 to 24 (DHGKST) and 136 to 139 (NKID).

This sequence belongs to the TRAFAC class translation factor GTPase superfamily. Classic translation factor GTPase family. LepA subfamily.

The protein localises to the cell membrane. It catalyses the reaction GTP + H2O = GDP + phosphate + H(+). In terms of biological role, required for accurate and efficient protein synthesis under certain stress conditions. May act as a fidelity factor of the translation reaction, by catalyzing a one-codon backward translocation of tRNAs on improperly translocated ribosomes. Back-translocation proceeds from a post-translocation (POST) complex to a pre-translocation (PRE) complex, thus giving elongation factor G a second chance to translocate the tRNAs correctly. Binds to ribosomes in a GTP-dependent manner. The polypeptide is Elongation factor 4 (Acetivibrio thermocellus (strain ATCC 27405 / DSM 1237 / JCM 9322 / NBRC 103400 / NCIMB 10682 / NRRL B-4536 / VPI 7372) (Clostridium thermocellum)).